Here is a 388-residue protein sequence, read N- to C-terminus: Chorismate synthase (388 aa).

2 residues coordinate NADP(+): Arg-39 and Arg-45. FMN-binding positions include 130-132, 251-252, Gly-296, 311-315, and Arg-337; these read RSS, NA, and KPIPT.

Belongs to the chorismate synthase family. As to quaternary structure, homotetramer. Requires FMNH2 as cofactor.

It catalyses the reaction 5-O-(1-carboxyvinyl)-3-phosphoshikimate = chorismate + phosphate. It participates in metabolic intermediate biosynthesis; chorismate biosynthesis; chorismate from D-erythrose 4-phosphate and phosphoenolpyruvate: step 7/7. Functionally, catalyzes the anti-1,4-elimination of the C-3 phosphate and the C-6 proR hydrogen from 5-enolpyruvylshikimate-3-phosphate (EPSP) to yield chorismate, which is the branch point compound that serves as the starting substrate for the three terminal pathways of aromatic amino acid biosynthesis. This reaction introduces a second double bond into the aromatic ring system. The sequence is that of Chorismate synthase from Streptococcus pyogenes serotype M28 (strain MGAS6180).